Here is a 790-residue protein sequence, read N- to C-terminus: GATOR2 complex protein WDR24 (790 aa).

WD repeat units follow at residues 72–112, 118–158, 161–201, 205–245, 249–291, and 295–338; these read SLNL…RNKQ, EHKR…SVST, GQSE…RCER, AHNG…AKEM, QTIA…VPAA, and EHRD…VERA. Serine 155 bears the Phosphoserine; by AMPK mark. 2 positions are modified to phosphoserine: serine 470 and serine 496. Phosphothreonine is present on threonine 581. Phosphoserine is present on residues serine 594 and serine 598. The segment at 718 to 740 adopts a C4-type zinc-finger fold; sequence NCSHCKRPMSSRGWVCDRCHRCA. Zn(2+)-binding residues include cysteine 719, cysteine 722, cysteine 733, cysteine 736, cysteine 743, cysteine 746, cysteine 757, cysteine 760, histidine 762, histidine 765, histidine 768, cysteine 779, cysteine 783, histidine 785, and cysteine 787. The segment at 741 to 790 adopts an RING-type; atypical zinc-finger fold; sequence SMCAVCHHVVKGLFVWCQGCSHGGHLQHIMKWLEGSSHCPAGCGHLCEYS.

This sequence belongs to the WD repeat WDR24 family. In terms of assembly, component of the GATOR2 subcomplex, composed of MIOS, SEC13, SEH1L, WDR24 and WDR59. The GATOR2 complex interacts with CASTOR1 and CASTOR2; the interaction is negatively regulated by arginine. The GATOR2 complex interacts with SESN1, SESN2 and SESN3; the interaction is negatively regulated by amino acids. SESN1, SESN2 and SESN3 convey leucine availability via direct interaction with SEH1L and WDR24. Phosphorylation at Ser-155 by AMPK in response to glucose deprivation inactivates WDR24 by promoting interaction with 14-3-3 proteins, such as YWHAG, preventing assembly of the GATOR2 complex. Post-translationally, autoubiquitinated; MIOS is required to prevent autoubiquitination.

The protein localises to the lysosome membrane. It catalyses the reaction S-ubiquitinyl-[E2 ubiquitin-conjugating enzyme]-L-cysteine + [acceptor protein]-L-lysine = [E2 ubiquitin-conjugating enzyme]-L-cysteine + N(6)-ubiquitinyl-[acceptor protein]-L-lysine.. It participates in protein modification; protein ubiquitination. With respect to regulation, the GATOR2 complex is negatively regulated by the upstream amino acid sensors CASTOR1 and SESN2, which sequester the GATOR2 complex in absence of amino acids. In the presence of abundant amino acids, GATOR2 is released from CASTOR1 and SESN2 and activated. Functionally, catalytic component of the GATOR2 complex, a multiprotein complex that acts as an activator of the amino acid-sensing branch of the mTORC1 signaling pathway. The GATOR2 complex indirectly activates mTORC1 through the inhibition of the GATOR1 subcomplex. GATOR2 probably acts as an E3 ubiquitin-protein ligase toward GATOR1. In the presence of abundant amino acids, the GATOR2 complex mediates ubiquitination of the NPRL2 core component of the GATOR1 complex, leading to GATOR1 inactivation. In the absence of amino acids, GATOR2 is inhibited, activating the GATOR1 complex. In addition to its role in regulation of the mTORC1 complex, promotes the acidification of lysosomes and facilitates autophagic flux. Within the GATOR2 complex, WDR24 constitutes the catalytic subunit that mediates 'Lys-6'-linked ubiquitination of NPRL2. The sequence is that of GATOR2 complex protein WDR24 from Homo sapiens (Human).